The following is a 335-amino-acid chain: Probable cytosolic iron-sulfur protein assembly protein Ciao1 (335 aa).

WD repeat units follow at residues 12 to 51 (GHKG…WTTK), 57 to 96 (GHKR…FECN), 101 to 140 (GHEN…EFEC), 146 to 185 (PHTQ…SDWD), 192 to 231 (SHTS…NDAG), 250 to 289 (QHSR…KRDE), and 301 to 335 (AHDQ…KMTE).

The protein belongs to the WD repeat CIA1 family.

In terms of biological role, essential component of the cytosolic iron-sulfur (Fe/S) protein assembly machinery. Required for the maturation of extramitochondrial Fe/S proteins. In Drosophila ananassae (Fruit fly), this protein is Probable cytosolic iron-sulfur protein assembly protein Ciao1.